The primary structure comprises 221 residues: Ribosomal RNA small subunit methyltransferase G (221 aa).

S-adenosyl-L-methionine contacts are provided by residues glycine 89, leucine 94, 140–141, and arginine 154; that span reads VE.

It belongs to the methyltransferase superfamily. RNA methyltransferase RsmG family.

The protein localises to the cytoplasm. It catalyses the reaction guanosine(527) in 16S rRNA + S-adenosyl-L-methionine = N(7)-methylguanosine(527) in 16S rRNA + S-adenosyl-L-homocysteine. Functionally, specifically methylates the N7 position of guanine in position 527 of 16S rRNA. This Methylibium petroleiphilum (strain ATCC BAA-1232 / LMG 22953 / PM1) protein is Ribosomal RNA small subunit methyltransferase G.